The sequence spans 309 residues: Ribosomal RNA small subunit methyltransferase H (309 aa).

Residues 32 to 34, Asp-52, Phe-79, Asp-100, and Gln-107 contribute to the S-adenosyl-L-methionine site; that span reads AGH.

It belongs to the methyltransferase superfamily. RsmH family.

It localises to the cytoplasm. The catalysed reaction is cytidine(1402) in 16S rRNA + S-adenosyl-L-methionine = N(4)-methylcytidine(1402) in 16S rRNA + S-adenosyl-L-homocysteine + H(+). Its function is as follows. Specifically methylates the N4 position of cytidine in position 1402 (C1402) of 16S rRNA. The polypeptide is Ribosomal RNA small subunit methyltransferase H (Mycoplasma capricolum subsp. capricolum (strain California kid / ATCC 27343 / NCTC 10154)).